The following is a 298-amino-acid chain: MVQIIDGKAVAATILEKVTRETQDLKANGVTPGLAVVIVGEDPASQVYVASKGRKATECGFHSVQHSLPENTSEEELVSLVEALNRDPAIHGILVQLPLPKQIDSERIIHTIAPEKDVDGFHILNVGMLGTGAVTKALVPCTPAGAMLLIEGVRGKDLSGLSAVVIGRSNIVGKPMANLLLAANATVTIAHSRTADLPAACRGADILVAAVGRPEMVKGDWIKPGATVIDVGVSRIPAPEKGEGKMKLVGDVAYAEAEKVAGAITPVPGGVGPMTIAMLMANTLAAASKASGRDLPAF.

NADP(+) is bound by residues 167 to 169, serine 192, and valine 233; that span reads GRS.

This sequence belongs to the tetrahydrofolate dehydrogenase/cyclohydrolase family. Homodimer.

The enzyme catalyses (6R)-5,10-methylene-5,6,7,8-tetrahydrofolate + NADP(+) = (6R)-5,10-methenyltetrahydrofolate + NADPH. It carries out the reaction (6R)-5,10-methenyltetrahydrofolate + H2O = (6R)-10-formyltetrahydrofolate + H(+). It functions in the pathway one-carbon metabolism; tetrahydrofolate interconversion. Catalyzes the oxidation of 5,10-methylenetetrahydrofolate to 5,10-methenyltetrahydrofolate and then the hydrolysis of 5,10-methenyltetrahydrofolate to 10-formyltetrahydrofolate. This is Bifunctional protein FolD from Chelativorans sp. (strain BNC1).